A 262-amino-acid polypeptide reads, in one-letter code: Zinc import ATP-binding protein ZnuC (262 aa).

The ABC transporter domain occupies 5 to 220; sequence IELQDICVDF…PSYLAMFGHR (216 aa). Residue 37–44 coordinates ATP; that stretch reads GPNGAGKS.

This sequence belongs to the ABC transporter superfamily. Zinc importer (TC 3.A.1.15.5) family. In terms of assembly, the complex is composed of two ATP-binding proteins (ZnuC), two transmembrane proteins (ZnuB) and a solute-binding protein (ZnuA).

The protein resides in the cell inner membrane. It carries out the reaction Zn(2+)(out) + ATP(in) + H2O(in) = Zn(2+)(in) + ADP(in) + phosphate(in) + H(+)(in). Functionally, part of the ABC transporter complex ZnuABC involved in zinc import. Responsible for energy coupling to the transport system. This is Zinc import ATP-binding protein ZnuC from Vibrio cholerae serotype O1 (strain ATCC 39315 / El Tor Inaba N16961).